Consider the following 296-residue polypeptide: Glucokinase (296 aa).

It belongs to the ROK (NagC/XylR) family. In terms of assembly, homodimer. The cofactor is a divalent metal cation.

It catalyses the reaction D-glucose + ATP = D-glucose 6-phosphate + ADP + H(+). Catalyzes the phosphorylation of D-glucose to D-glucose 6-phosphate using ATP as the phosphate donor. Has a broad hexose specificity, and in addition to glucose, which shows the highest catalytic efficiency, it can also phosphorylate fructose, mannose, galactose and sorbitol. Can also use CTP, GTP or UTP as phosphoryl donor. This chain is Glucokinase, found in Pyrobaculum calidifontis (strain DSM 21063 / JCM 11548 / VA1).